The following is a 249-amino-acid chain: MSQQHDYVIGKNAVIETLKSDRKLYKLWMAENTVKGQAQQVIELAKKQGITIQYVPRKKLDQMVTGQHQGVVAQVAAYEYAELDDLYKAAEEKNEQPFFLILDELEDPHNLGSIMRTADAVGAHGIVIPKRRAVGLTTTVAKASTGAIEHIPVARVTNLARTLEEMKERGIWVVGTDASAREDFRNMDGNMPLALVIGSEGKGMGRLVKEKCDFLIKLPMAGKVTSLNASVAAGLLMYEVYRKRNPVGE.

The S-adenosyl-L-methionine site is built by Gly198, Leu218, and Leu227.

The protein belongs to the class IV-like SAM-binding methyltransferase superfamily. RNA methyltransferase TrmH family.

The protein is Putative TrmH family tRNA/rRNA methyltransferase YacO (yacO) of Bacillus subtilis (strain 168).